The chain runs to 546 residues: DNA ligase (546 aa).

Glu-244 contacts ATP. Catalysis depends on Lys-246, which acts as the N6-AMP-lysine intermediate. ATP is bound by residues Arg-251, Arg-266, Glu-295, Phe-334, Arg-405, and Lys-411.

Belongs to the ATP-dependent DNA ligase family. Mg(2+) serves as cofactor.

It carries out the reaction ATP + (deoxyribonucleotide)n-3'-hydroxyl + 5'-phospho-(deoxyribonucleotide)m = (deoxyribonucleotide)n+m + AMP + diphosphate.. DNA ligase that seals nicks in double-stranded DNA during DNA replication, DNA recombination and DNA repair. The polypeptide is DNA ligase (Methanocorpusculum labreanum (strain ATCC 43576 / DSM 4855 / Z)).